Here is a 628-residue protein sequence, read N- to C-terminus: Kelch-like protein diablo (628 aa).

Residues 1–56 (MGDLPGSTGGGSGPAAAGNASGNSSSAGNTGLGVAGTTGVDRPPSPARLSHTSEKH) are disordered. Residues 14–29 (PAAAGNASGNSSSAGN) are compositionally biased toward low complexity. Residues 74 to 141 (CDVVLNVGGR…CYTAHIIVEE (68 aa)) form the BTB domain. The BACK domain maps to 176 to 278 (CLGIRAFADT…SPKFLVGTVG (103 aa)). Kelch repeat units follow at residues 325-371 (VLFA…VLND), 373-419 (LYAV…VLDG), 420-466 (FLYA…VLGG), 468-513 (LYAI…VFNN), 515-560 (IYAV…VVNG), and 561-607 (QLYA…VMRA).

The protein operates within protein modification; protein ubiquitination. Probable substrate-specific adapter of an E3 ubiquitin-protein ligase complex which mediates the ubiquitination and subsequent proteasomal degradation of target proteins. May have a role in synapse differentiation and growth. The sequence is that of Kelch-like protein diablo from Drosophila persimilis (Fruit fly).